Here is a 122-residue protein sequence, read N- to C-terminus: MVQQESRLKVADNTGAKEVLAIRVLGGTKKRYASVGDKIVVSVKEATPNGSIKKGAVSTAVVVRTRKEVRRPDGSYIRFDDNACVLLGPQGEMRGTRVFGPVARELRDKQFMKIVSLAPEVL.

The protein belongs to the universal ribosomal protein uL14 family. As to quaternary structure, part of the 50S ribosomal subunit. Forms a cluster with proteins L3 and L19. In the 70S ribosome, L14 and L19 interact and together make contacts with the 16S rRNA in bridges B5 and B8.

Functionally, binds to 23S rRNA. Forms part of two intersubunit bridges in the 70S ribosome. This Christiangramia forsetii (strain DSM 17595 / CGMCC 1.15422 / KT0803) (Gramella forsetii) protein is Large ribosomal subunit protein uL14.